Consider the following 725-residue polypeptide: MLYKGDTLYLDWLEDGIAELVFDAPGSVNKLDTATVASLGQALEVLEKQHDLKGLLLRSNKAAFIVGADITEFLSLFLVPEEQLSQWLHFANSVFNRLEDLPVPTLAAVNGYALGGGCECVLATDYRLATPDLRIGLPETKLGIMPGFGGSVRLPRMLGADSALEIIAAGKDVGAEHALKIGLVDGVVKQEKLIEGAIAVLRQAITGDLDWRAKRQPKLEPLKLSKIEAAMSFTIAKGMVAQTAGKHYPAPMTAVKTIEAAARFGREEALNLENKSFVPLAHTNEARALVGIFLNDQYVKGKAKKLTKDIETPKQAAVLGAGIMGGGIAYQSAWKGVPVIMKDINDKSLNLGMTEAAKLLNKQLERGKIDGLKLAGVISTIHPTLDYAGFDRVDVVVEAVVENPKVKKAVLAETEQKVRPETVLASNTSTIPIGELASALERPENFCGMHFFNPVHRMPLVEIIRGEKSSDETIAKVIAWASKMGKTPIVVNDCPGFFVNRVLFPYFAGFSQLLRDGADFRKVDKVMEKQFGWPMGPAYLLDVVGIDTAHHAQAVMAAGFPQRMQKEYRDAIDALFDANRFGQKNGLGFWRYKEDSKGKPKKEEDAAVDDLLASVSQPKRDFSDDEIIARMMIPMINEVVRCLEEGIIASPAEADMALVYGLGFPPFHGGAFRWLDTQGSAKYLDMAQQYQHLGPLYEVPEGLRNKARHNEPIIPRLNQPVRLVL.

The interval 1–189 (MLYKGDTLYL…KIGLVDGVVK (189 aa)) is enoyl-CoA hydratase/isomerase. Aspartate 296 provides a ligand contact to substrate. The interval 311 to 725 (ETPKQAAVLG…RLNQPVRLVL (415 aa)) is 3-hydroxyacyl-CoA dehydrogenase. NAD(+)-binding positions include methionine 324, aspartate 343, 400 to 402 (VVE), lysine 407, and serine 429. The active-site For 3-hydroxyacyl-CoA dehydrogenase activity is histidine 450. Residue asparagine 453 participates in NAD(+) binding. Positions 500 and 660 each coordinate substrate.

It in the N-terminal section; belongs to the enoyl-CoA hydratase/isomerase family. The protein in the C-terminal section; belongs to the 3-hydroxyacyl-CoA dehydrogenase family. Heterotetramer of two alpha chains (FadB) and two beta chains (FadA).

It carries out the reaction a (3S)-3-hydroxyacyl-CoA + NAD(+) = a 3-oxoacyl-CoA + NADH + H(+). It catalyses the reaction a (3S)-3-hydroxyacyl-CoA = a (2E)-enoyl-CoA + H2O. The enzyme catalyses a 4-saturated-(3S)-3-hydroxyacyl-CoA = a (3E)-enoyl-CoA + H2O. The catalysed reaction is (3S)-3-hydroxybutanoyl-CoA = (3R)-3-hydroxybutanoyl-CoA. It carries out the reaction a (3Z)-enoyl-CoA = a 4-saturated (2E)-enoyl-CoA. It catalyses the reaction a (3E)-enoyl-CoA = a 4-saturated (2E)-enoyl-CoA. The protein operates within lipid metabolism; fatty acid beta-oxidation. Functionally, involved in the aerobic and anaerobic degradation of long-chain fatty acids via beta-oxidation cycle. Catalyzes the formation of 3-oxoacyl-CoA from enoyl-CoA via L-3-hydroxyacyl-CoA. It can also use D-3-hydroxyacyl-CoA and cis-3-enoyl-CoA as substrate. This Salmonella paratyphi A (strain ATCC 9150 / SARB42) protein is Fatty acid oxidation complex subunit alpha.